The chain runs to 373 residues: Sensor protein DegM (373 aa).

A run of 4 helical transmembrane segments spans residues 27–47 (ILLA…AIAV), 57–77 (LFLL…LCVN), 91–111 (YASL…LYLI), and 122–142 (VAGW…TYLF). A Histidine kinase domain is found at 170-370 (SIAHEVRNPL…KVVLSLPIEK (201 aa)). Phosphohistidine; by autocatalysis is present on His-173.

It localises to the cell membrane. The enzyme catalyses ATP + protein L-histidine = ADP + protein N-phospho-L-histidine.. Functionally, involved in a sensory transduction pathway that enhances the production of minor proteases. The polypeptide is Sensor protein DegM (degM) (Bacillus sp. (strain B21-2)).